The sequence spans 86 residues: U-actitoxin-Avd10a (86 aa).

An N-terminal signal peptide occupies residues 1 to 20 (MSRIAILLFVAFLLVAGISA). Positions 21 to 42 (KSTAHFKKNVLADLFKERRFNA) are excised as a propeptide. A ShKT domain is found at 51 to 86 (CVNIDVDSFCDGMAERGACNIIPQMATNCAKACNSC). Disulfide bonds link Cys51–Cys86, Cys60–Cys79, and Cys69–Cys83.

It belongs to the sea anemone type 1 potassium channel toxin family. Type 1b subfamily.

Its subcellular location is the secreted. It localises to the nematocyst. Its function is as follows. Inhibits voltage-gated potassium channels (Kv1/KCNA). The chain is U-actitoxin-Avd10a from Anemonia viridis (Snakelocks anemone).